Reading from the N-terminus, the 149-residue chain is Protein AIM7 (149 aa).

Serine 2 carries the N-acetylserine modification. One can recognise an ADF-H domain in the interval 3–147 (NLYKIGTETR…DVEELREQLE (145 aa)). Serine 137 bears the Phosphoserine mark.

The protein belongs to the actin-binding proteins ADF family. GMF subfamily.

The protein localises to the cytoplasm. The protein resides in the nucleus. May be involved in mitochondrial organization and biogenesis. In Saccharomyces cerevisiae (strain ATCC 204508 / S288c) (Baker's yeast), this protein is Protein AIM7 (AIM7).